Here is a 132-residue protein sequence, read N- to C-terminus: T-cell receptor alpha chain V region 2B4 (132 aa).

Positions 1–20 (MKSLSVSLVVLWLLLNWVNS) are cleaved as a signal peptide. Positions 21-113 (QQNVQQSPES…SALYLCAVTL (93 aa)) are v segment. N-linked (GlcNAc...) asparagine glycosylation occurs at Asn42. The segment at 114 to 117 (YGGS) is d segment. The j segment stretch occupies residues 118–132 (GNKLIFGTGTLLSVK).

This chain is T-cell receptor alpha chain V region 2B4, found in Mus musculus (Mouse).